The sequence spans 541 residues: Putative ammonium transporter sll0537 (541 aa).

11 helical membrane passes run 6–26 (TLWL…FMCL), 44–64 (FADF…IMFG), 86–106 (LAVF…IISG), 117–137 (YLLV…DWAW), 161–181 (FAGS…TILV), 203–223 (MPFS…FNGG), 235–255 (IMVN…LISL), 260–280 (MIQV…ITAS), 283–303 (VVMT…AYLV), 316–336 (VDAV…VGLF), and 356–376 (LLGI…FLTL).

It belongs to the ammonia transporter channel (TC 1.A.11.2) family.

Its subcellular location is the cell membrane. This chain is Putative ammonium transporter sll0537, found in Synechocystis sp. (strain ATCC 27184 / PCC 6803 / Kazusa).